Here is a 216-residue protein sequence, read N- to C-terminus: Acetate CoA-transferase subunit beta (216 aa).

Glu46 is a catalytic residue.

It belongs to the 3-oxoacid CoA-transferase subunit B family. Heterotetramer composed of two alpha subunits (AtoD) and two beta subunits (AtoA).

It is found in the cytoplasm. It carries out the reaction an acyl-CoA + acetate = a carboxylate + acetyl-CoA. The enzyme catalyses acetoacetate + acetyl-CoA = acetoacetyl-CoA + acetate. The catalysed reaction is butanoate + acetyl-CoA = butanoyl-CoA + acetate. It catalyses the reaction acetoacetate + butanoyl-CoA = acetoacetyl-CoA + butanoate. It participates in lipid metabolism; short-chain fatty acid metabolism. Its activity is regulated as follows. Inhibited by p-chloromercuribenzoate. Its function is as follows. Coenzyme A transferase which is involved in short-chain fatty acid degradation and catalyzes the activation of short-chain fatty acids to their respective CoA thiolesters. During acetoacetate degradation, catalyzes the transfer of CoA from acetyl-CoA to acetoacetate by a mechanism involving a covalent enzyme-CoA compound as a reaction intermediate. Utilizes a variety of short chain acyl-CoA and carboxylic acid substrates but exhibits maximal activity with normal and 3-keto substrates. The polypeptide is Acetate CoA-transferase subunit beta (Escherichia coli (strain K12)).